The primary structure comprises 278 residues: 2-dehydro-3-deoxyphosphooctonate aldolase (278 aa).

It belongs to the KdsA family.

The protein resides in the cytoplasm. The catalysed reaction is D-arabinose 5-phosphate + phosphoenolpyruvate + H2O = 3-deoxy-alpha-D-manno-2-octulosonate-8-phosphate + phosphate. It functions in the pathway carbohydrate biosynthesis; 3-deoxy-D-manno-octulosonate biosynthesis; 3-deoxy-D-manno-octulosonate from D-ribulose 5-phosphate: step 2/3. It participates in bacterial outer membrane biogenesis; lipopolysaccharide biosynthesis. This Dechloromonas aromatica (strain RCB) protein is 2-dehydro-3-deoxyphosphooctonate aldolase.